Here is a 288-residue protein sequence, read N- to C-terminus: Energy-coupling factor transporter ATP-binding protein EcfA2 (288 aa).

The ABC transporter domain maps to 3 to 245 (IKIENLTHVY…VDTLESVGLA (243 aa)). 40-47 (GHTGSGKS) is an ATP binding site.

It belongs to the ABC transporter superfamily. Energy-coupling factor EcfA family. Forms a stable energy-coupling factor (ECF) transporter complex composed of 2 membrane-embedded substrate-binding proteins (S component), 2 ATP-binding proteins (A component) and 2 transmembrane proteins (T component).

Its subcellular location is the cell membrane. Functionally, ATP-binding (A) component of a common energy-coupling factor (ECF) ABC-transporter complex. Unlike classic ABC transporters this ECF transporter provides the energy necessary to transport a number of different substrates. The sequence is that of Energy-coupling factor transporter ATP-binding protein EcfA2 from Clostridium tetani (strain Massachusetts / E88).